Here is a 390-residue protein sequence, read N- to C-terminus: 5-hydroxytryptamine receptor 1B (390 aa).

Residues 1-46 (MEEPGAQCAPPXPAGSETWVPQANLSSAPSQNCSAKDYIYQDSIAL) lie on the Extracellular side of the membrane. Asn24 and Asn32 each carry an N-linked (GlcNAc...) asparagine glycan. A helical membrane pass occupies residues 47-72 (PWKVLLVMLLALITLATTLSNAFVIA). Topologically, residues 73–86 (TVYRTRKLHTPANY) are cytoplasmic. Residues 87-111 (LIASLAVTDLLVSILVMPISTMYTV) traverse the membrane as a helical segment. The Extracellular portion of the chain corresponds to 112 to 119 (TGRWTLGQ). The helical transmembrane segment at 120–145 (VVCDFWLSSDITCCTASILHLCVIAL) threads the bilayer. Cysteines 122 and 199 form a disulfide. Residues Asp129 and Thr134 each coordinate ergotamine. The short motif at 146–148 (DRY) is the DRY motif; important for ligand-induced conformation changes and signaling element. Residues 146-165 (DRYWAITDAVEYSAKRTPKR) are Cytoplasmic-facing. A helical transmembrane segment spans residues 166 to 184 (AAVMIALVWVFSISISLPP). Over 185–205 (FFWRQAKAEEEVSECVVNTDH) the chain is Extracellular. Val201 is an ergotamine binding site. The helical transmembrane segment at 206–229 (ILYTVYSTVGAFYFPTLLLIALYG) threads the bilayer. At 230–315 (RIYVEARSRI…AARERKATKT (86 aa)) the chain is on the cytoplasmic side. Over residues 259–272 (DSPGSTSSVTSINS) the composition is skewed to polar residues. Residues 259–281 (DSPGSTSSVTSINSRVPDVPSES) form a disordered region. Residues 316-337 (LGIILGAFIVCWLPFFIISLVM) traverse the membrane as a helical segment. Residues 338-347 (PICKDACWFH) are Extracellular-facing. The chain crosses the membrane as a helical span at residues 348–370 (LAIFDFFTWLGYLNSLINPIIYT). Residues 365-369 (NPIIY) carry the NPxxY motif; important for ligand-induced conformation changes and signaling motif. Topologically, residues 371–390 (MSNEDFKQAFHKLIRFKCTS) are cytoplasmic. Cys388 carries S-palmitoyl cysteine lipidation.

Belongs to the G-protein coupled receptor 1 family. Homodimer. Heterodimer with HTR1D. Phosphorylated. Desensitization of the receptor may be mediated by its phosphorylation. In terms of processing, palmitoylated.

It is found in the cell membrane. G-protein coupled receptor for 5-hydroxytryptamine (serotonin). Also functions as a receptor for ergot alkaloid derivatives, various anxiolytic and antidepressant drugs and other psychoactive substances, such as lysergic acid diethylamide (LSD). Ligand binding causes a conformation change that triggers signaling via guanine nucleotide-binding proteins (G proteins) and modulates the activity of downstream effectors, such as adenylate cyclase. HTR1B is coupled to G(i)/G(o) G alpha proteins and mediates inhibitory neurotransmission by inhibiting adenylate cyclase activity. Arrestin family members inhibit signaling via G proteins and mediate activation of alternative signaling pathways. Regulates the release of 5-hydroxytryptamine, dopamine and acetylcholine in the brain, and thereby affects neural activity, nociceptive processing, pain perception, mood and behavior. Besides, plays a role in vasoconstriction of cerebral arteries. This chain is 5-hydroxytryptamine receptor 1B (HTR1B), found in Gorilla gorilla gorilla (Western lowland gorilla).